The chain runs to 65 residues: Putative beta-neurotoxin RjAa12 (65 aa).

An LCN-type CS-alpha/beta domain is found at 1 to 64 (KEGYPVGRDG…VWDSSTNKCG (64 aa)). 4 disulfides stabilise this stretch: Cys11/Cys63, Cys15/Cys37, Cys22/Cys44, and Cys26/Cys46.

It belongs to the long (4 C-C) scorpion toxin superfamily. Sodium channel inhibitor family. Beta subfamily. As to expression, expressed by the venom gland.

Its subcellular location is the secreted. Functionally, beta toxins bind voltage-independently at site-4 of sodium channels (Nav) and shift the voltage of activation toward more negative potentials thereby affecting sodium channel activation and promoting spontaneous and repetitive firing. In Rhopalurus junceus (Caribbean blue scorpion), this protein is Putative beta-neurotoxin RjAa12.